Here is a 101-residue protein sequence, read N- to C-terminus: Small ribosomal subunit protein uS14 (101 aa).

The protein belongs to the universal ribosomal protein uS14 family. Part of the 30S ribosomal subunit. Contacts proteins S3 and S10.

Its function is as follows. Binds 16S rRNA, required for the assembly of 30S particles and may also be responsible for determining the conformation of the 16S rRNA at the A site. The chain is Small ribosomal subunit protein uS14 from Colwellia psychrerythraea (strain 34H / ATCC BAA-681) (Vibrio psychroerythus).